The primary structure comprises 651 residues: PTS system sucrose-specific EIIBCA component (651 aa).

The 84-residue stretch at 3–86 (HQEVADRVLN…IVKTGLKEVT (84 aa)) folds into the PTS EIIB type-1 domain. Cysteine 25 (phosphocysteine intermediate; for EIIB activity) is an active-site residue. The next 10 helical transmembrane spans lie at 109 to 129 (VLSD…LLMA), 158 to 178 (MINA…GFSA), 182 to 202 (FGGN…PSLV), 204 to 224 (GYSV…VFGL), 226 to 246 (VAQA…FILA), 264 to 284 (FTPM…VGPV), 303 to 323 (TGWI…ITGL), 345 to 365 (FIFP…LAIF), 404 to 424 (FVFA…FHVL), and 444 to 464 (IPAF…PTFI). Positions 121–481 (LVAGGLLMAL…DDRDQVKSPA (361 aa)) constitute a PTS EIIC type-1 domain. Residues 510-614 (DQVFSAEIMG…DPTVMLIVTN (105 aa)) form the PTS EIIA type-1 domain. Histidine 562 (tele-phosphohistidine intermediate; for EIIA activity) is an active-site residue.

The protein resides in the cell membrane. The enzyme catalyses N(pros)-phospho-L-histidyl-[protein](out) + sucrose = sucrose 6(G)-phosphate(in) + L-histidyl-[protein]. Functionally, the phosphoenolpyruvate-dependent sugar phosphotransferase system (sugar PTS), a major carbohydrate active transport system, catalyzes the phosphorylation of incoming sugar substrates concomitantly with their translocation across the cell membrane. This system is involved in sucrose transport. This is PTS system sucrose-specific EIIBCA component (scrA) from Pediococcus pentosaceus.